Consider the following 414-residue polypeptide: ATP-dependent Clp protease ATP-binding subunit ClpX (414 aa).

In terms of domain architecture, ClpX-type ZB spans 1 to 51; sequence MADSKTKKKCSFCGRSENEVGFLITGMNGYICDSCATQAYEITQEALGEGR. Positions 10, 13, 32, and 35 each coordinate Zn(2+). 120-127 contributes to the ATP binding site; it reads STGTGKTL.

This sequence belongs to the ClpX chaperone family. Component of the ClpX-ClpP complex. Forms a hexameric ring that, in the presence of ATP, binds to fourteen ClpP subunits assembled into a disk-like structure with a central cavity, resembling the structure of eukaryotic proteasomes.

Its function is as follows. ATP-dependent specificity component of the Clp protease. It directs the protease to specific substrates. Can perform chaperone functions in the absence of ClpP. This is ATP-dependent Clp protease ATP-binding subunit ClpX from Bacteroides thetaiotaomicron (strain ATCC 29148 / DSM 2079 / JCM 5827 / CCUG 10774 / NCTC 10582 / VPI-5482 / E50).